Consider the following 178-residue polypeptide: Anthranilate synthase component 2 (178 aa).

The Glutamine amidotransferase type-1 domain maps to 1 to 178; the sequence is MIVVVDCKDS…RNFVEMCHDG (178 aa). 49-51 contacts L-glutamine; it reads GPG. The active-site Nucleophile; for GATase activity is the C71. L-glutamine contacts are provided by residues Q75 and 120 to 121; that span reads SL. Residues H155 and E157 each act as for GATase activity in the active site.

Heterotetramer consisting of two non-identical subunits: a beta subunit (TrpG) and a large alpha subunit (TrpE).

It carries out the reaction chorismate + L-glutamine = anthranilate + pyruvate + L-glutamate + H(+). The protein operates within amino-acid biosynthesis; L-tryptophan biosynthesis; L-tryptophan from chorismate: step 1/5. In terms of biological role, part of a heterotetrameric complex that catalyzes the two-step biosynthesis of anthranilate, an intermediate in the biosynthesis of L-tryptophan. In the first step, the glutamine-binding beta subunit (TrpG) of anthranilate synthase (AS) provides the glutamine amidotransferase activity which generates ammonia as a substrate that, along with chorismate, is used in the second step, catalyzed by the large alpha subunit of AS (TrpE) to produce anthranilate. In the absence of TrpG, TrpE can synthesize anthranilate directly from chorismate and high concentrations of ammonia. The polypeptide is Anthranilate synthase component 2 (trpG) (Archaeoglobus fulgidus (strain ATCC 49558 / DSM 4304 / JCM 9628 / NBRC 100126 / VC-16)).